The chain runs to 409 residues: Major capsid protein (409 aa).

It belongs to the lambda phage major capsid protein family. Homomultimer. Interacts with the portal protein. Interacts with the decoration protein.

The protein localises to the virion. Its subcellular location is the host cytoplasm. Assembles to form an icosahedric capsid shell with a T=7 symmetry although with a diameter of about 82 nm, which is a larger volume than the usual T=7 capsids. A dramatic reconfiguration of the capsid shell that expands the procaspid from a diameter of 66 nm to a supersized capsid of 82 nm, allows packaging of the large viral DNA genome. The capsid decoration protein binds the expanded capsid and stabilizes it. The sequence is that of Major capsid protein from Thermus virus P23-45 (Thermus thermophilus phage P23-45).